We begin with the raw amino-acid sequence, 344 residues long: Serpentine receptor class H-72 (344 aa).

The next 7 membrane-spanning stretches (helical) occupy residues 30–50 (GLAF…FFTG), 66–86 (LSLV…SFFI), 110–132 (TVVQ…TLLF), 155–175 (WLAG…FNLA), 221–241 (SIYM…LVIV), 259–279 (YGLI…SVLI), and 292–312 (LVSI…LLVH).

The protein belongs to the nematode receptor-like protein srh family.

It localises to the membrane. The chain is Serpentine receptor class H-72 (srh-72) from Caenorhabditis elegans.